Consider the following 67-residue polypeptide: Large ribosomal subunit protein bL35 (67 aa).

This sequence belongs to the bacterial ribosomal protein bL35 family.

The sequence is that of Large ribosomal subunit protein bL35 from Synechocystis sp. (strain ATCC 27184 / PCC 6803 / Kazusa).